A 233-amino-acid chain; its full sequence is Orotidine 5'-phosphate decarboxylase (233 aa).

Residues Asp-13, Lys-35, 62-71 (DLKFHDIPNT), Thr-122, Arg-182, Gln-191, Gly-211, and Arg-212 contribute to the substrate site. Catalysis depends on Lys-64, which acts as the Proton donor.

The protein belongs to the OMP decarboxylase family. Type 1 subfamily. In terms of assembly, homodimer.

It catalyses the reaction orotidine 5'-phosphate + H(+) = UMP + CO2. It functions in the pathway pyrimidine metabolism; UMP biosynthesis via de novo pathway; UMP from orotate: step 2/2. Functionally, catalyzes the decarboxylation of orotidine 5'-monophosphate (OMP) to uridine 5'-monophosphate (UMP). This is Orotidine 5'-phosphate decarboxylase from Pseudomonas fluorescens (strain ATCC BAA-477 / NRRL B-23932 / Pf-5).